The sequence spans 367 residues: Pre-small/secreted glycoprotein (367 aa).

The signal sequence occupies residues 1-33 (MGSGYQLLQLPRERFRKTSFLVWVIILFQRAIS). A glycan (N-linked (GlcNAc...) asparagine; by host) is linked at Asn41. Intrachain disulfides connect Cys109–Cys136 and Cys122–Cys148. Asn205, Asn239, Asn258, and Asn269 each carry an N-linked (GlcNAc...) asparagine; by host glycan.

This sequence belongs to the filoviruses glycoprotein family. Homodimer; disulfide-linked. The homodimers are linked by two disulfide bonds in a parallel orientation. As to quaternary structure, monomer. This precursor is processed into mature sGP and delta-peptide by host furin or furin-like proteases. The cleavage site corresponds to the furin optimal cleavage sequence [KR]-X-[KR]-R. In terms of processing, N-glycosylated. Post-translationally, O-glycosylated.

It localises to the secreted. Its function is as follows. Seems to possess an anti-inflammatory activity as it can reverse the barrier-decreasing effects of TNF alpha. Might therefore contribute to the lack of inflammatory reaction seen during infection in spite the of extensive necrosis and massive virus production. Does not seem to be involved in activation of primary macrophages. Does not seem to interact specifically with neutrophils. Viroporin that permeabilizes mammalian cell plasma membranes. It acts by altering permeation of ionic compounds and small molecules. This activity may lead to viral enterotoxic activity. This chain is Pre-small/secreted glycoprotein (GP), found in Reston ebolavirus (strain Siena/Philippine-92) (REBOV).